The following is a 578-amino-acid chain: Probable actinorhodin transporter (578 aa).

The disordered stretch occupies residues 1 to 33 (MSSVEADEPDRATAPPSALLPEDGPGPDGTAAG). The next 12 helical transmembrane spans lie at 78–98 (VIQW…VVGG), 109–129 (MFVV…VAAG), 135–155 (AARF…LGLI), 170–190 (AFGP…GFLV), 202–222 (VFLI…LLLP), 232–252 (FDVV…FPLV), 259–279 (WPAW…GFVA), 306–326 (GLAV…LLAL), 341–361 (LTMT…GAVL), 369–389 (ALHG…LTIG), 444–464 (LGFT…LGSQ), and 546–566 (AMVR…ALAF).

Belongs to the major facilitator superfamily. EmrB family.

Its subcellular location is the cell membrane. Functionally, promotes the efflux of actinorhodin. In Streptomyces coelicolor (strain ATCC BAA-471 / A3(2) / M145), this protein is Probable actinorhodin transporter (actII-2).